The chain runs to 378 residues: MVLLWLTLLLIALPCLLQTKEDPNPPITNLRMKAKAQQLTWDLNRNVTDIECVKDADYSMPAVNNSYCQFGAISLCEVTNYTVRVANPPFSTWILFPENSGKPWAGAENLTCWIHDVDFLSCSWAVGPGAPADVQYDLYLNVANRRQQYECLHYKTDAQGTRIGCRFDDISRLSSGSQSSHILVRGRSAAFGIPCTDKFVVFSQIEILTPPNMTAKCNKTHSFMHWKMRSHFNRKFRYELQIQKRMQPVITEQVRDRTSFQLLNPGTYTVQIRARERVYEFLSAWSTPQRFECDQEEGANTRAWRTSLLIALGTLLALVCVFVICRRYLVMQRLFPRIPHMKDPIGDSFQNDKLVVWEAGKAGLEECLVTEVQVVQKT.

The signal sequence occupies residues 1–18 (MVLLWLTLLLIALPCLLQ). The Extracellular portion of the chain corresponds to 19-305 (TKEDPNPPIT…EEGANTRAWR (287 aa)). N-linked (GlcNAc...) asparagine glycosylation is found at asparagine 46, asparagine 64, asparagine 80, and asparagine 109. Intrachain disulfides connect cysteine 52-cysteine 68, cysteine 76-cysteine 195, cysteine 112-cysteine 122, and cysteine 151-cysteine 165. 2 N-linked (GlcNAc...) asparagine glycosylation sites follow: asparagine 212 and asparagine 218. Cysteine 217 and cysteine 293 are disulfide-bonded. Positions 282 to 286 (LSAWS) match the WSXWS motif motif. A helical membrane pass occupies residues 306-325 (TSLLIALGTLLALVCVFVIC). The Cytoplasmic segment spans residues 326–378 (RRYLVMQRLFPRIPHMKDPIGDSFQNDKLVVWEAGKAGLEECLVTEVQVVQKT). A Box 1 motif motif is present at residues 334–342 (LFPRIPHMK).

The protein belongs to the type I cytokine receptor family. Type 5 subfamily. Interacts with IL3. Heterodimer of an alpha and a beta subunit. The beta subunit is common to the IL3, IL5 and GM-CSF receptors. Ubiquitinated by RNFT2 in response to IL3. Ubiquitination leads ligand-induced degradation by the proteasome. Ubiquitinated by RNF128 via 'Lys-27'-linked polyubiquitination, facilitating its degradation through the lysosomal pathway.

It is found in the cell membrane. In terms of biological role, cell surface receptor for IL3 expressed on hematopoietic progenitor cells, monocytes and B-lymphocytes that controls the production and differentiation of hematopoietic progenitor cells into lineage-restricted cells. Ligand stimulation rapidly induces hetrodimerization with IL3RB, phosphorylation and enzyme activity of effector proteins such as JAK2 and PI3K that play a role in signaling cell proliferation and differentiation. Activation of JAK2 leads to STAT5-mediated transcriptional program. This Homo sapiens (Human) protein is Interleukin-3 receptor subunit alpha.